The sequence spans 466 residues: E3 SUMO-protein ligase TRIM60 (466 aa).

The RING-type zinc-finger motif lies at 15–56 (CYICSDFMEDPVTSRCGHNFCFACLRLLWDDLQGNIFCPVCQ). The B box-type zinc finger occupies 91 to 132 (EEHTVCPKHDQPLVLFCVRDRDVLCTQCSLSVEHQGHYTCPI). Zn(2+) contacts are provided by cysteine 96, histidine 99, cysteine 118, and histidine 124. Positions 171 to 223 (LREEAQYQKIEIRYEIGQIKLFLQSEYEAHLNESHMEELRSFSELNGYLETLL) form a coiled coil. A B30.2/SPRY domain is found at 272–462 (LSLPAQYSGL…LEILTHPTPD (191 aa)).

The protein belongs to the TRIM/RBCC family.

E3 SUMO-protein ligase that mediates SUMOylation of TAB2 leading to inhibition of NF-kappa-B and MAPK pathways by suppressing the TRAF6/TAB2/TAK1 complex. This chain is E3 SUMO-protein ligase TRIM60 (Trim60), found in Mus musculus (Mouse).